Here is a 284-residue protein sequence, read N- to C-terminus: Pseudopaline exporter CntI (284 aa).

Helical transmembrane passes span 2–22 (VLDLLKSGVLLAVLASFTFSV), 34–54 (LPAAEIVFFRSAIGTLLIYLL), 74–94 (GVMGALYLVCYFYAIAHIPLA), 96–116 (ASILAHMSPFFVILFSALFLG), 122–142 (AVYWLLLVVVLGALMIVKPFS), 147–167 (SVYAVVGLLSAVFAAGASVAI), 179–199 (IVFYFLAVATLVAIPLMWNDF), 209–229 (GLLLAIGVVSLLGQVFLTRAF), 236–256 (IVAVTRYIGIVFNAGWGWLFW), and 259–279 (VPDALTIAGGVLIVVACIALS). 2 consecutive EamA domains span residues 8 to 138 (SGVL…LMIV) and 151 to 279 (VVGL…IALS).

Belongs to the EamA transporter family.

The protein localises to the cell inner membrane. Functionally, transports the metallophore pseudopaline, which is involved in the acquisition of nickel and zinc, and thus enables bacterial growth inside the host, where metal access is limited. Is probably involved in the export of pseudopaline. Essential for iron acquisition during the interaction with airway mucus secretions (AMS). The protein is Pseudopaline exporter CntI of Pseudomonas aeruginosa (strain ATCC 15692 / DSM 22644 / CIP 104116 / JCM 14847 / LMG 12228 / 1C / PRS 101 / PAO1).